The primary structure comprises 622 residues: MNFNKEKYPTLALAETPESLRLLPKESLPELCSELRSYLLDAVSQSSGHFASGLGVIELTLALHYVYKTPFDHLIWDVGHQAYPHKILTGRRDQIDRIRQKNGLHPFPSREESDYDVLSVGHSSTSISAGLGLAVAAEREGLGRKIICVIGDGAITAGMAFEAMNHAGELHSDMLVILNDNDMSISENVGGLNNRFAQLLSGSFYTRLREKGKKAFSAAPPIKALLKRTEEHLKGMVVPSTLFEELGFNYIGPIDGHHIYTLVHMLENMRHLKGPQLLHVVTKKGKGYTPAEKDPIAWHAVPRFDPLSGTLPKTVDSIPTYSNIFGDWLCDTAATDPRLMAITPAMREGSGMVRFSREYPKQYFDVAIAEQHAVTFAAGLAIGGYKPVVAIYSTFLQRAYDQLIHDVAIQNLPVLFAIDRAGLVGADGQTHQGAFDLSFMRCIPNMVIMAPSDENECRQMLHTGYLHPGPAAVRYPRGQGTGVALQPLFPLTIGKSEIKIQGEKIALLCFGTLLSVAREVAIHLNATLVDMRFIKPLDTELILAMASNHSLLVTIEENVIKGGAGSAVNECLMSHKKTVMLLNIGLPDQFIPQGEQNEMRAAYGLDSRGIQKQIQAYCESEM.

Thiamine diphosphate contacts are provided by residues His80 and 121–123 (GHS). Asp152 serves as a coordination point for Mg(2+). Thiamine diphosphate contacts are provided by residues 153–154 (GA), Asn181, Tyr288, and Glu370. Position 181 (Asn181) interacts with Mg(2+).

This sequence belongs to the transketolase family. DXPS subfamily. Homodimer. The cofactor is Mg(2+). Requires thiamine diphosphate as cofactor.

The catalysed reaction is D-glyceraldehyde 3-phosphate + pyruvate + H(+) = 1-deoxy-D-xylulose 5-phosphate + CO2. It participates in metabolic intermediate biosynthesis; 1-deoxy-D-xylulose 5-phosphate biosynthesis; 1-deoxy-D-xylulose 5-phosphate from D-glyceraldehyde 3-phosphate and pyruvate: step 1/1. Catalyzes the acyloin condensation reaction between C atoms 2 and 3 of pyruvate and glyceraldehyde 3-phosphate to yield 1-deoxy-D-xylulose-5-phosphate (DXP). The polypeptide is 1-deoxy-D-xylulose-5-phosphate synthase (Hamiltonella defensa subsp. Acyrthosiphon pisum (strain 5AT)).